Reading from the N-terminus, the 475-residue chain is Ribulose bisphosphate carboxylase large chain (475 aa).

A propeptide spanning residues 1–2 (MV) is cleaved from the precursor. Proline 3 is modified (N-acetylproline). Lysine 14 carries the N6,N6,N6-trimethyllysine modification. The substrate site is built by asparagine 123 and threonine 173. Residue lysine 175 is the Proton acceptor of the active site. Residue lysine 177 coordinates substrate. 3 residues coordinate Mg(2+): lysine 201, aspartate 203, and glutamate 204. At lysine 201 the chain carries N6-carboxylysine. Histidine 294 functions as the Proton acceptor in the catalytic mechanism. Residues arginine 295, histidine 327, and serine 379 each contribute to the substrate site.

This sequence belongs to the RuBisCO large chain family. Type I subfamily. In terms of assembly, heterohexadecamer of 8 large chains and 8 small chains. The cofactor is Mg(2+).

The protein resides in the plastid. The protein localises to the chloroplast. It carries out the reaction 2 (2R)-3-phosphoglycerate + 2 H(+) = D-ribulose 1,5-bisphosphate + CO2 + H2O. The enzyme catalyses D-ribulose 1,5-bisphosphate + O2 = 2-phosphoglycolate + (2R)-3-phosphoglycerate + 2 H(+). Its function is as follows. RuBisCO catalyzes two reactions: the carboxylation of D-ribulose 1,5-bisphosphate, the primary event in carbon dioxide fixation, as well as the oxidative fragmentation of the pentose substrate in the photorespiration process. Both reactions occur simultaneously and in competition at the same active site. The polypeptide is Ribulose bisphosphate carboxylase large chain (Chlamydomonas moewusii (Chlamydomonas eugametos)).